The sequence spans 83 residues: Acylphosphatase (83 aa).

In terms of domain architecture, Acylphosphatase-like spans 1-83 (MIEGRVQRVG…TGDDWFEVRY (83 aa)). Residues R12 and N30 contribute to the active site.

This sequence belongs to the acylphosphatase family.

The enzyme catalyses an acyl phosphate + H2O = a carboxylate + phosphate + H(+). This chain is Acylphosphatase (acyP), found in Synechococcus sp. (strain CC9605).